Here is a 1143-residue protein sequence, read N- to C-terminus: MEKRETFVQAVSKELVGEFLQFVQLDKEASDPFSLNELLDELSRKQKEELWQRLKNLLTDVLLESPVDGWQVVEAQGEDNMETEHGSKMRKSIEIIYAITSVILASVSVINESENYEALLECVIILNGILYALPESERKLQSSIQDLCVTWWEKGLPAKEDTGKTAFVMLLRRSLETKTGADVCRLWRIHQALYCFDYDLEESGEIKDMLLECFININYIKKEEGRRFLSCLFNWNINFIKMIHGTIKNQLQGLQKSLMVYIAEIYFRAWKKASGKILEAIENDCIQDFMFHGIHLPRRSPVHSKVREVLSYFHHQKKVRQGVEEMLYRLYKPILWRGLKARNSEVRSNAALLFVEAFPIRDPNLHAIEMDSEIQKQFEELYSLLEDPYPMVRSTGILGVCKITSKYWEMMPPTILIDLLKKVTGELAFDTSSADVRCSVFKCLPMILDNKLSHPLLEQLLPALRYSLHDNSEKVRVAFVDMLLKIKAVRAAKFWKICPMEHILVRLETDSRPVSRRLVSLIFNSFLPVNQPEEVWCERCVTLVQMNHAAARRFYQYAHEHTACTNIAKLIHVIRHCLNACIQRAVREPPEDEEEEDGREKENVTVLDKTLSVNDVACMAGLLEIIVILWKSIDRSMENNKEAKLYTINKFASVLPEYLKVFKDDRCKIPLFMLMSFMPASAVPPFSCGVISTLRSREEGAVDKSYCTLLDCLCSWGQVGHILELVDNWLPTEHAQAKSNTASKGRVQIHDTRPVKPELALVYIEYLLTHPKNRECLLSAPRKKLNHLLKALETSKADLESLLQTPGGKPRGFSEAAAPRAFGLHCRLSIHLQHKFCSEGKVYLSMLEDTGFWLESKILSFIQDQEEDYLKLHRVIYQQIIQTYLTVCKDVVMVGLGDHQFQMQLLQRSLGIMQTVKGFFYVSLLLDILKEITGSSLIQKTDSDEEVAMLLDTVQKVFQKMLECIARSFRKQPEEGLRLLYSVQRPLHEFITAVQSRHTDTPVHRGVLSTLIAGPVVEISHQLRKVSDVEELTPPEHLSDLPPFSRCLIGIIIKSSNVVRSFLDELKACVASNDIEGIVCLTAAVHIILVINAGKHKSSKVREVAATVHRKLKTFMEITLEEDSIERFLYESSSRTLGELLNS.

A Phosphoserine modification is found at Ser-30. An HEAT repeat occupies 460–498 (LLPALRYSLHDNSEKVRVAFVDMLLKIKAVRAAKFWKIC). Thr-805 and Thr-1119 each carry phosphothreonine.

In terms of assembly, component of the condensin-2 complex, which contains the SMC2 and SMC4 heterodimer, and 3 non SMC subunits that probably regulate the complex: NCAPH2, NCAPD3 and NCAPG2.

It is found in the nucleus. In terms of biological role, regulatory subunit of the condensin-2 complex, a complex which establishes mitotic chromosome architecture and is involved in physical rigidity of the chromatid axis. The polypeptide is Condensin-2 complex subunit G2 (NCAPG2) (Homo sapiens (Human)).